We begin with the raw amino-acid sequence, 131 residues long: Small ribosomal subunit protein uS11 (131 aa).

This sequence belongs to the universal ribosomal protein uS11 family. In terms of assembly, part of the 30S ribosomal subunit. Interacts with proteins S7 and S18. Binds to IF-3.

Its function is as follows. Located on the platform of the 30S subunit, it bridges several disparate RNA helices of the 16S rRNA. Forms part of the Shine-Dalgarno cleft in the 70S ribosome. In Granulibacter bethesdensis (strain ATCC BAA-1260 / CGDNIH1), this protein is Small ribosomal subunit protein uS11.